The following is a 362-amino-acid chain: Chorismate synthase (362 aa).

An NADP(+)-binding site is contributed by Arg47. Residues 124-126 (RSS), Gly286, 301-305 (KPTAT), and Arg327 contribute to the FMN site.

Belongs to the chorismate synthase family. Homotetramer. FMNH2 is required as a cofactor.

It carries out the reaction 5-O-(1-carboxyvinyl)-3-phosphoshikimate = chorismate + phosphate. The protein operates within metabolic intermediate biosynthesis; chorismate biosynthesis; chorismate from D-erythrose 4-phosphate and phosphoenolpyruvate: step 7/7. Catalyzes the anti-1,4-elimination of the C-3 phosphate and the C-6 proR hydrogen from 5-enolpyruvylshikimate-3-phosphate (EPSP) to yield chorismate, which is the branch point compound that serves as the starting substrate for the three terminal pathways of aromatic amino acid biosynthesis. This reaction introduces a second double bond into the aromatic ring system. This Trichormus variabilis (strain ATCC 29413 / PCC 7937) (Anabaena variabilis) protein is Chorismate synthase.